A 350-amino-acid polypeptide reads, in one-letter code: Phosphate acyltransferase (350 aa).

Belongs to the PlsX family. As to quaternary structure, homodimer. Probably interacts with PlsY.

The protein resides in the cytoplasm. The catalysed reaction is a fatty acyl-[ACP] + phosphate = an acyl phosphate + holo-[ACP]. It functions in the pathway lipid metabolism; phospholipid metabolism. Functionally, catalyzes the reversible formation of acyl-phosphate (acyl-PO(4)) from acyl-[acyl-carrier-protein] (acyl-ACP). This enzyme utilizes acyl-ACP as fatty acyl donor, but not acyl-CoA. The polypeptide is Phosphate acyltransferase (Phenylobacterium zucineum (strain HLK1)).